Reading from the N-terminus, the 121-residue chain is Large ribosomal subunit protein uL14c (121 aa).

Belongs to the universal ribosomal protein uL14 family. As to quaternary structure, part of the 50S ribosomal subunit.

The protein resides in the plastid. Its subcellular location is the chloroplast. Binds to 23S rRNA. This chain is Large ribosomal subunit protein uL14c, found in Trieres chinensis (Marine centric diatom).